The following is a 204-amino-acid chain: Guanylate kinase (204 aa).

The 179-residue stretch at 18–196 folds into the Guanylate kinase-like domain; it reads PKLFTISAPA…SYEILKSIFI (179 aa). 25-32 is a binding site for ATP; sequence APAGAGKT.

The protein belongs to the guanylate kinase family.

The protein resides in the cytoplasm. It carries out the reaction GMP + ATP = GDP + ADP. Its function is as follows. Essential for recycling GMP and indirectly, cGMP. The sequence is that of Guanylate kinase from Chlamydia caviae (strain ATCC VR-813 / DSM 19441 / 03DC25 / GPIC) (Chlamydophila caviae).